We begin with the raw amino-acid sequence, 497 residues long: MFIRRLHTSSRRLTCGEALRACQQTGARSANGQLMLSQHVQEFDPEMYDILTKERSRQKRSITLIPSENFTSVAVMNLLGSEMQNKYSEGYPGQRYYGGNQYIDMAESLCQKRALELYGLDPAKWGVNVQSLSGAPANLYAYSAIMEVGDRMMGLDLPHGGHLSHGYQLQNGNKISYISKYFQTMAYRVDPATGLVDYDTLSETSKLFRPKVIVAGTSAYARVLDYKRFREIADACGAYLLSDMAHVSGLVAAGVHPSPFEYSDIVTTTTHKSLRGPRGAMIFYRKGIRKVTKKGTEIMYDLDKRINFSVFPAHQGGPHNHTISALAVALKQAATPEFKNYQTAVVENAKVFGEELSKRGFSLVSGGTDTHLLLIDLSPMGIDGSRLETILERLNIAANKNTIPGDKSALYPSGLRVGTPAMTTRGFGPAEFGRVAAYINEAVKLAIGLKSQEPVDAKDAKTRLAHFKSFCAESEQVTKLANEVADWVAQYPVPGEL.

Residues 1 to 27 constitute a mitochondrion transit peptide; sequence MFIRRLHTSSRRLTCGEALRACQQTGA. Lys-272 carries the post-translational modification N6-(pyridoxal phosphate)lysine.

It belongs to the SHMT family. As to quaternary structure, homotetramer. Pyridoxal 5'-phosphate serves as cofactor.

The protein resides in the mitochondrion. The enzyme catalyses (6R)-5,10-methylene-5,6,7,8-tetrahydrofolate + glycine + H2O = (6S)-5,6,7,8-tetrahydrofolate + L-serine. It participates in one-carbon metabolism; tetrahydrofolate interconversion. Functionally, interconversion of serine and glycine. The chain is Serine hydroxymethyltransferase, mitochondrial (SHM1) from Eremothecium gossypii (strain ATCC 10895 / CBS 109.51 / FGSC 9923 / NRRL Y-1056) (Yeast).